Reading from the N-terminus, the 188-residue chain is MIVNEFEKLTAGKLLLASATMLESNFKRTVLLMCEHNEEGSLGFILNRPLEFKVREAIHGFNDVDDVLHQGGPVQVNSIHFLHSRGDLIHNSQEVLPGIYWGGNKDEVSYLLNTGVMHPSEIRFYLGYAGWSAGQLFSEFEEGAWYTAEATPDVIFSDAYERMWSRTVRAKGGAYQLIANSPELPGMN.

This sequence belongs to the UPF0301 (AlgH) family.

In Chlorobium chlorochromatii (strain CaD3), this protein is UPF0301 protein Cag_1601.